The following is a 180-amino-acid chain: UPF0227 protein YcfP (180 aa).

The protein belongs to the UPF0227 family.

This is UPF0227 protein YcfP from Salmonella paratyphi A (strain ATCC 9150 / SARB42).